A 130-amino-acid polypeptide reads, in one-letter code: Small ribosomal subunit protein uS9 (130 aa).

This sequence belongs to the universal ribosomal protein uS9 family.

This is Small ribosomal subunit protein uS9 from Shewanella denitrificans (strain OS217 / ATCC BAA-1090 / DSM 15013).